The primary structure comprises 391 residues: GTPase Obg (391 aa).

The region spanning 1–159 (MQFVDEATID…RRLRLELKVL (159 aa)) is the Obg domain. Residues 160–333 (ADVGLLGMPN…LVYALMNAIE (174 aa)) enclose the OBG-type G domain. Residues 166–173 (GMPNAGKS), 191–195 (FTTLI), 213–216 (DIPG), 283–286 (NKID), and 314–316 (SAA) contribute to the GTP site. Residues Ser-173 and Thr-193 each coordinate Mg(2+). Basic and acidic residues predominate over residues 367–377 (LKAEARQARQN). The segment at 367-391 (LKAEARQARQNDDDDDHDVEVVYEP) is disordered. A compositionally biased stretch (acidic residues) spans 378–391 (DDDDDHDVEVVYEP).

This sequence belongs to the TRAFAC class OBG-HflX-like GTPase superfamily. OBG GTPase family. As to quaternary structure, monomer. The cofactor is Mg(2+).

It is found in the cytoplasm. Functionally, an essential GTPase which binds GTP, GDP and possibly (p)ppGpp with moderate affinity, with high nucleotide exchange rates and a fairly low GTP hydrolysis rate. Plays a role in control of the cell cycle, stress response, ribosome biogenesis and in those bacteria that undergo differentiation, in morphogenesis control. This Alcanivorax borkumensis (strain ATCC 700651 / DSM 11573 / NCIMB 13689 / SK2) protein is GTPase Obg.